An 87-amino-acid chain; its full sequence is U3-theraphotoxin-Hhn1a 18 (87 aa).

Positions 1 to 24 (MVNTKASMFLTFAGLVLLFVVCYA) are cleaved as a signal peptide. The propeptide occupies 25–52 (SESEEKEFPKEMLSSIFAVDNDFKQEER). 3 disulfides stabilise this stretch: Cys-54–Cys-67, Cys-61–Cys-72, and Cys-66–Cys-79.

This sequence belongs to the neurotoxin 10 (Hwtx-1) family. 51 (Hntx-8) subfamily. Hntx-8 sub-subfamily. Expressed by the venom gland.

The protein resides in the secreted. Functionally, ion channel inhibitor. The polypeptide is U3-theraphotoxin-Hhn1a 18 (Cyriopagopus hainanus (Chinese bird spider)).